The following is a 53-amino-acid chain: ATP synthase protein 8 (53 aa).

The chain crosses the membrane as a helical span at residues 4–24; the sequence is MAPISWLLLFIVFSITFILFC.

Belongs to the ATPase protein 8 family. In terms of assembly, F-type ATPases have 2 components, CF(1) - the catalytic core - and CF(0) - the membrane proton channel.

The protein resides in the mitochondrion membrane. In terms of biological role, mitochondrial membrane ATP synthase (F(1)F(0) ATP synthase or Complex V) produces ATP from ADP in the presence of a proton gradient across the membrane which is generated by electron transport complexes of the respiratory chain. F-type ATPases consist of two structural domains, F(1) - containing the extramembraneous catalytic core and F(0) - containing the membrane proton channel, linked together by a central stalk and a peripheral stalk. During catalysis, ATP synthesis in the catalytic domain of F(1) is coupled via a rotary mechanism of the central stalk subunits to proton translocation. Part of the complex F(0) domain. Minor subunit located with subunit a in the membrane. In Drosophila yakuba (Fruit fly), this protein is ATP synthase protein 8 (mt:ATPase8).